Here is a 74-residue protein sequence, read N- to C-terminus: uncharacterized protein (74 aa).

A helical transmembrane segment spans residues 52–72; the sequence is ITFGFTVLGLGIGMIFGDAGL.

The protein resides in the membrane. This is an uncharacterized protein from Methanocaldococcus jannaschii (strain ATCC 43067 / DSM 2661 / JAL-1 / JCM 10045 / NBRC 100440) (Methanococcus jannaschii).